Here is a 152-residue protein sequence, read N- to C-terminus: Endoribonuclease YbeY (152 aa).

The Zn(2+) site is built by H113, H117, and H123.

The protein belongs to the endoribonuclease YbeY family. The cofactor is Zn(2+).

The protein localises to the cytoplasm. Its function is as follows. Single strand-specific metallo-endoribonuclease involved in late-stage 70S ribosome quality control and in maturation of the 3' terminus of the 16S rRNA. This Acidovorax sp. (strain JS42) protein is Endoribonuclease YbeY.